The chain runs to 180 residues: Fucolectin-3 (180 aa).

Positions 1–22 are cleaved as a signal peptide; that stretch reads MEVKMIILLFQILAISTLKSDS. An F5/8 type C-like region spans residues 31-179; it reads QENVALRGRA…VEVNVLFPAP (149 aa). Asn-58, Asp-61, Asn-63, and Ser-72 together coordinate Ca(2+). 3 disulfides stabilise this stretch: Cys-73/Cys-168, Cys-104/Cys-105, and Cys-130/Cys-146. Residues His-75 and Arg-101 each coordinate alpha-L-fucose. Positions 101–103 match the Cell attachment site motif; sequence RGD. Arg-108 is a binding site for alpha-L-fucose. The Ca(2+) site is built by Cys-168 and Glu-169.

The protein belongs to the fucolectin family. Homotrimer. Parenchymal hepatocytes.

It localises to the secreted. Its subcellular location is the extracellular space. Its function is as follows. Acts as a defensive agent. Recognizes blood group fucosylated oligosaccharides including A, B, H and Lewis B-type antigens. Does not recognize Lewis A antigen and has low affinity for monovalent haptens. The sequence is that of Fucolectin-3 from Anguilla japonica (Japanese eel).